The sequence spans 264 residues: Thymidylate synthase (264 aa).

R21 contributes to the dUMP binding site. (6R)-5,10-methylene-5,6,7,8-tetrahydrofolate is bound at residue H51. Residue 126-127 (RR) coordinates dUMP. The active-site Nucleophile is the C146. DUMP contacts are provided by residues 166–169 (RSCD), N177, and 207–209 (HLY). D169 contributes to the (6R)-5,10-methylene-5,6,7,8-tetrahydrofolate binding site. Position 263 (A263) interacts with (6R)-5,10-methylene-5,6,7,8-tetrahydrofolate.

The protein belongs to the thymidylate synthase family. Bacterial-type ThyA subfamily. In terms of assembly, homodimer.

The protein localises to the cytoplasm. The catalysed reaction is dUMP + (6R)-5,10-methylene-5,6,7,8-tetrahydrofolate = 7,8-dihydrofolate + dTMP. It functions in the pathway pyrimidine metabolism; dTTP biosynthesis. Its function is as follows. Catalyzes the reductive methylation of 2'-deoxyuridine-5'-monophosphate (dUMP) to 2'-deoxythymidine-5'-monophosphate (dTMP) while utilizing 5,10-methylenetetrahydrofolate (mTHF) as the methyl donor and reductant in the reaction, yielding dihydrofolate (DHF) as a by-product. This enzymatic reaction provides an intracellular de novo source of dTMP, an essential precursor for DNA biosynthesis. The polypeptide is Thymidylate synthase (Citrobacter koseri (strain ATCC BAA-895 / CDC 4225-83 / SGSC4696)).